Here is a 249-residue protein sequence, read N- to C-terminus: Probable septum site-determining protein MinC (249 aa).

Residues 115–144 (PTAVSPPPPPPPPPARAEPAPPAARPAPGR) form a disordered region. The segment covering 118–139 (VSPPPPPPPPPARAEPAPPAAR) has biased composition (pro residues).

This sequence belongs to the MinC family. In terms of assembly, interacts with MinD and FtsZ.

Functionally, cell division inhibitor that blocks the formation of polar Z ring septums. Rapidly oscillates between the poles of the cell to destabilize FtsZ filaments that have formed before they mature into polar Z rings. Prevents FtsZ polymerization. This Xanthomonas axonopodis pv. citri (strain 306) protein is Probable septum site-determining protein MinC.